The following is a 179-amino-acid chain: Cytochrome b6-f complex iron-sulfur subunit 1 (179 aa).

A helical transmembrane segment spans residues 21–43 (LLTFGTVTGVALGALYPVVNYFI). A Rieske domain is found at 61–162 (GNDVSVSKFL…AKTENDKIVL (102 aa)). Residues cysteine 108, histidine 110, cysteine 126, and histidine 129 each coordinate [2Fe-2S] cluster. Cysteine 113 and cysteine 128 are oxidised to a cystine.

Belongs to the Rieske iron-sulfur protein family. The 4 large subunits of the cytochrome b6-f complex are cytochrome b6, subunit IV (17 kDa polypeptide, PetD), cytochrome f and the Rieske protein, while the 4 small subunits are PetG, PetL, PetM and PetN. The complex functions as a dimer. Requires [2Fe-2S] cluster as cofactor.

Its subcellular location is the cellular thylakoid membrane. The catalysed reaction is 2 oxidized [plastocyanin] + a plastoquinol + 2 H(+)(in) = 2 reduced [plastocyanin] + a plastoquinone + 4 H(+)(out). Functionally, component of the cytochrome b6-f complex, which mediates electron transfer between photosystem II (PSII) and photosystem I (PSI), cyclic electron flow around PSI, and state transitions. This Nostoc sp. (strain PCC 7120 / SAG 25.82 / UTEX 2576) protein is Cytochrome b6-f complex iron-sulfur subunit 1.